Consider the following 1011-residue polypeptide: Protein FAM83B (1011 aa).

Positions 1-283 (METSSMLSSL…RTLYARSCVP (283 aa)) are DUF1669. Positions 1-284 (METSSMLSSL…TLYARSCVPS (284 aa)) are required for interaction with RAF1 and for the function. Serine 334, serine 422, serine 424, serine 466, and serine 543 each carry phosphoserine. Positions 555 to 585 (EVNSCTTGSSNSTIIGSQGSETPKEVPDTPT) are disordered. The segment covering 557-574 (NSCTTGSSNSTIIGSQGS) has biased composition (low complexity). Serine 664 carries the post-translational modification Phosphoserine. Disordered stretches follow at residues 691–738 (NRVR…TKSV) and 750–769 (ESNK…SFLK). Residues 694–705 (RQPEKPKEDLLK) are compositionally biased toward basic and acidic residues. Polar residues-rich tracts occupy residues 706 to 715 (SSKSMHNVTH) and 727 to 738 (RNSPSGTTTKSV). The span at 750–762 (ESNKELASKKEVK) shows a compositional bias: basic and acidic residues. Threonine 782 carries the phosphothreonine modification. The residue at position 802 (serine 802) is a Phosphoserine. A disordered region spans residues 807-928 (LVSEGEENQK…TSSELLRSHS (122 aa)). A compositionally biased stretch (basic and acidic residues) spans 813–828 (ENQKPKKSDTKVDSSP). Residues serine 852, serine 869, and serine 915 each carry the phosphoserine modification. Residues 913 to 923 (TSSPRPTSSEL) are compositionally biased toward low complexity.

This sequence belongs to the FAM83 family. Interacts with EGFR; positively regulates EGFR inducing its autophosphorylation in absence of stimulation by EGF. Interacts with RAF1; displaces 14-3-3 proteins from RAF1 and activates RAF1 within the RAS/MAPK signaling cascade. Interacts with AKT1, PIK3CA and PIK3R1; activates the PI3K/AKT signaling cascade. Directly interacts (via DUF1669) with casein kinase isoforms CSNK1A1, CSNK1A1L, CSNK1D and CSNK1E. Phosphorylated in vitro by CSNK1A1.

The protein localises to the cytoplasm. It is found in the membrane. Probable proto-oncogene that functions in the epidermal growth factor receptor/EGFR signaling pathway. Activates both the EGFR itself and downstream RAS/MAPK and PI3K/AKT/TOR signaling cascades. The polypeptide is Protein FAM83B (Homo sapiens (Human)).